We begin with the raw amino-acid sequence, 50 residues long: Cuticle protein CP498 (50 aa).

A run of 2 repeats spans residues 6-23 (ATVG…LIQL) and 30-47 (ILEG…FVTY).

Calcified shell.

The sequence is that of Cuticle protein CP498 from Cancer pagurus (Rock crab).